The following is a 279-amino-acid chain: Shikimate dehydrogenase (NADP(+)) (279 aa).

Shikimate is bound by residues 21 to 23 (SMS) and Thr-68. Lys-72 serves as the catalytic Proton acceptor. Residues Asn-93 and Asp-108 each coordinate shikimate. NADP(+) contacts are provided by residues 130–134 (GAGGA) and Leu-219. Tyr-221 provides a ligand contact to shikimate. Residue Gly-242 participates in NADP(+) binding.

It belongs to the shikimate dehydrogenase family. Homodimer.

It carries out the reaction shikimate + NADP(+) = 3-dehydroshikimate + NADPH + H(+). It functions in the pathway metabolic intermediate biosynthesis; chorismate biosynthesis; chorismate from D-erythrose 4-phosphate and phosphoenolpyruvate: step 4/7. Functionally, involved in the biosynthesis of the chorismate, which leads to the biosynthesis of aromatic amino acids. Catalyzes the reversible NADPH linked reduction of 3-dehydroshikimate (DHSA) to yield shikimate (SA). This Oleidesulfovibrio alaskensis (strain ATCC BAA-1058 / DSM 17464 / G20) (Desulfovibrio alaskensis) protein is Shikimate dehydrogenase (NADP(+)).